A 255-amino-acid chain; its full sequence is Pyrroloquinoline-quinone synthase (255 aa).

The protein belongs to the PqqC family.

It carries out the reaction 6-(2-amino-2-carboxyethyl)-7,8-dioxo-1,2,3,4,7,8-hexahydroquinoline-2,4-dicarboxylate + 3 O2 = pyrroloquinoline quinone + 2 H2O2 + 2 H2O + H(+). It participates in cofactor biosynthesis; pyrroloquinoline quinone biosynthesis. In terms of biological role, ring cyclization and eight-electron oxidation of 3a-(2-amino-2-carboxyethyl)-4,5-dioxo-4,5,6,7,8,9-hexahydroquinoline-7,9-dicarboxylic-acid to PQQ. The chain is Pyrroloquinoline-quinone synthase from Cereibacter sphaeroides (strain KD131 / KCTC 12085) (Rhodobacter sphaeroides).